A 207-amino-acid polypeptide reads, in one-letter code: Thiamine-phosphate synthase (207 aa).

Residues 35 to 39 (QYRDK) and N67 each bind 4-amino-2-methyl-5-(diphosphooxymethyl)pyrimidine. Residues D68 and D86 each contribute to the Mg(2+) site. A 4-amino-2-methyl-5-(diphosphooxymethyl)pyrimidine-binding site is contributed by T105. 132–134 (SVT) contributes to the 2-[(2R,5Z)-2-carboxy-4-methylthiazol-5(2H)-ylidene]ethyl phosphate binding site. Residue K135 participates in 4-amino-2-methyl-5-(diphosphooxymethyl)pyrimidine binding. Position 162 (G162) interacts with 2-[(2R,5Z)-2-carboxy-4-methylthiazol-5(2H)-ylidene]ethyl phosphate.

It belongs to the thiamine-phosphate synthase family. Requires Mg(2+) as cofactor.

The catalysed reaction is 2-[(2R,5Z)-2-carboxy-4-methylthiazol-5(2H)-ylidene]ethyl phosphate + 4-amino-2-methyl-5-(diphosphooxymethyl)pyrimidine + 2 H(+) = thiamine phosphate + CO2 + diphosphate. It carries out the reaction 2-(2-carboxy-4-methylthiazol-5-yl)ethyl phosphate + 4-amino-2-methyl-5-(diphosphooxymethyl)pyrimidine + 2 H(+) = thiamine phosphate + CO2 + diphosphate. It catalyses the reaction 4-methyl-5-(2-phosphooxyethyl)-thiazole + 4-amino-2-methyl-5-(diphosphooxymethyl)pyrimidine + H(+) = thiamine phosphate + diphosphate. It functions in the pathway cofactor biosynthesis; thiamine diphosphate biosynthesis; thiamine phosphate from 4-amino-2-methyl-5-diphosphomethylpyrimidine and 4-methyl-5-(2-phosphoethyl)-thiazole: step 1/1. Condenses 4-methyl-5-(beta-hydroxyethyl)thiazole monophosphate (THZ-P) and 2-methyl-4-amino-5-hydroxymethyl pyrimidine pyrophosphate (HMP-PP) to form thiamine monophosphate (TMP). The chain is Thiamine-phosphate synthase from Pseudomonas putida (strain ATCC 47054 / DSM 6125 / CFBP 8728 / NCIMB 11950 / KT2440).